A 186-amino-acid polypeptide reads, in one-letter code: LIM domain-containing protein DDB_G0271356 (186 aa).

LIM zinc-binding domains follow at residues 7–67 (PECY…DKFA), 68–127 (PKCQ…KIGF), and 128–186 (LCRH…KLYG).

The polypeptide is LIM domain-containing protein DDB_G0271356 (Dictyostelium discoideum (Social amoeba)).